The following is a 246-amino-acid chain: Probable site-specific recombinase in afa region (246 aa).

In terms of domain architecture, Tyr recombinase spans 40 to 225; it reads ATPAYLLAPE…FALDMAATLA (186 aa). Active-site residues include Arg-75, Lys-102, His-177, Arg-180, and His-203. Catalysis depends on Tyr-212, which acts as the O-(3'-phospho-DNA)-tyrosine intermediate.

Belongs to the 'phage' integrase family.

This Escherichia coli protein is Probable site-specific recombinase in afa region (int).